A 238-amino-acid polypeptide reads, in one-letter code: Ribonuclease PH (238 aa).

Phosphate contacts are provided by residues R86 and 124–126 (GTR).

It belongs to the RNase PH family. In terms of assembly, homohexameric ring arranged as a trimer of dimers.

The enzyme catalyses tRNA(n+1) + phosphate = tRNA(n) + a ribonucleoside 5'-diphosphate. Its function is as follows. Phosphorolytic 3'-5' exoribonuclease that plays an important role in tRNA 3'-end maturation. Removes nucleotide residues following the 3'-CCA terminus of tRNAs; can also add nucleotides to the ends of RNA molecules by using nucleoside diphosphates as substrates, but this may not be physiologically important. Probably plays a role in initiation of 16S rRNA degradation (leading to ribosome degradation) during starvation. In Yersinia pseudotuberculosis serotype O:1b (strain IP 31758), this protein is Ribonuclease PH.